We begin with the raw amino-acid sequence, 800 residues long: uncharacterized protein (800 aa).

The N-terminal stretch at 1 to 21 (MNRFFISTLLLLAQHLAPAAA) is a signal peptide. Positions 63–72 (SLSTGSPVEI) are enriched in polar residues. Disordered stretches follow at residues 63–470 (SLST…PLTT), 602–670 (TPIT…SSTS), and 710–776 (SSLS…TPSS). Composition is skewed to low complexity over residues 73-314 (TSTS…SSTS), 321-368 (STSS…SSTS), 375-444 (STSS…TSTP), and 451-470 (TTSTSVPYTSTPVTSTPLTT). A compositionally biased stretch (low complexity) spans 710-720 (SSLSSIPNNST). The span at 721-734 (EVKTASTSSGTEIK) shows a compositional bias: polar residues. A compositionally biased stretch (low complexity) spans 735 to 776 (TASTSSGSSSSSSYTPASSTSTTTSSVSSRQSSSSSSFTPSS).

It is found in the secreted. The protein localises to the cell surface. This is an uncharacterized protein from Schizosaccharomyces pombe (strain 972 / ATCC 24843) (Fission yeast).